A 161-amino-acid chain; its full sequence is Phosphopantetheine adenylyltransferase (161 aa).

Serine 11 is a substrate binding site. ATP-binding positions include 11-12 (SF) and histidine 19. Residues lysine 43, leucine 75, and arginine 89 each contribute to the substrate site. ATP is bound by residues 90–92 (GLR), glutamate 100, and 125–131 (YSYLSSS).

Belongs to the bacterial CoaD family. As to quaternary structure, homohexamer. The cofactor is Mg(2+).

Its subcellular location is the cytoplasm. The catalysed reaction is (R)-4'-phosphopantetheine + ATP + H(+) = 3'-dephospho-CoA + diphosphate. The protein operates within cofactor biosynthesis; coenzyme A biosynthesis; CoA from (R)-pantothenate: step 4/5. Reversibly transfers an adenylyl group from ATP to 4'-phosphopantetheine, yielding dephospho-CoA (dPCoA) and pyrophosphate. In Citrifermentans bemidjiense (strain ATCC BAA-1014 / DSM 16622 / JCM 12645 / Bem) (Geobacter bemidjiensis), this protein is Phosphopantetheine adenylyltransferase.